The following is a 335-amino-acid chain: Galactosylgalactosylxylosylprotein 3-beta-glucuronosyltransferase 3 (335 aa).

Residues M1–N7 are Cytoplasmic-facing. Residues V8–G28 traverse the membrane as a helical; Signal-anchor for type II membrane protein segment. At Q29 to V335 the chain is on the lumenal side. UDP-alpha-D-glucuronate is bound by residues P82–Y84, D113, R156, R161, and D194–D196. D196 is a binding site for Mn(2+). The interaction with galactose moiety of substrate glycoprotein stretch occupies residues W243 to D252. E281 serves as the catalytic Proton donor/acceptor. N300 carries N-linked (GlcNAc...) asparagine glycosylation. H308–R310 contributes to the UDP-alpha-D-glucuronate binding site. The span at E312–L322 shows a compositional bias: basic and acidic residues. The interval E312–V335 is disordered.

Belongs to the glycosyltransferase 43 family. As to quaternary structure, homodimer; disulfide-linked. Interacts with PXYLP1; the interaction increases the 2-phosphoxylose phosphatase activity of PXYLP1 during completion of linkage region formation in a B3GAT3-mediated manner. Mn(2+) is required as a cofactor. N-glycosylated. As to expression, expressed in heart, aorta, bone, and also in osteoblasts.

The protein localises to the golgi apparatus membrane. It localises to the golgi apparatus. Its subcellular location is the cis-Golgi network. It catalyses the reaction 3-O-(beta-D-galactosyl-(1-&gt;3)-beta-D-galactosyl-(1-&gt;4)-beta-D-xylosyl)-L-seryl-[protein] + UDP-alpha-D-glucuronate = 3-O-(beta-D-GlcA-(1-&gt;3)-beta-D-Gal-(1-&gt;3)-beta-D-Gal-(1-&gt;4)-beta-D-Xyl)-L-seryl-[protein] + UDP + H(+). It functions in the pathway protein modification; protein glycosylation. Glycosaminoglycans biosynthesis. Involved in forming the linkage tetrasaccharide present in heparan sulfate and chondroitin sulfate. Transfers a glucuronic acid moiety from the uridine diphosphate-glucuronic acid (UDP-GlcUA) to the common linkage region trisaccharide Gal-beta-1,3-Gal-beta-1,4-Xyl covalently bound to a Ser residue at the glycosaminylglycan attachment site of proteoglycans. Can also play a role in the biosynthesis of l2/HNK-1 carbohydrate epitope on glycoproteins. Stimulates 2-phosphoxylose phosphatase activity of PXYLP1 in presence of uridine diphosphate-glucuronic acid (UDP-GlcUA) during completion of linkage region formation. The sequence is that of Galactosylgalactosylxylosylprotein 3-beta-glucuronosyltransferase 3 (B3gat3) from Mus musculus (Mouse).